Reading from the N-terminus, the 317-residue chain is o-succinylbenzoate synthase (317 aa).

Residues 71–73 (NAT) and Lys-95 contribute to the 2-succinylbenzoate site. Lys-97 serves as the catalytic Proton donor. Mg(2+) contacts are provided by Asp-128, Glu-154, and Asp-177. Residue 128 to 130 (DVN) coordinates 2-succinylbenzoate. Lys-201 is a 2-succinylbenzoate binding site. The active-site Proton acceptor is Lys-201.

Belongs to the mandelate racemase/muconate lactonizing enzyme family. MenC type 1 subfamily. As to quaternary structure, monomer. A divalent metal cation is required as a cofactor.

It catalyses the reaction (1R,6R)-6-hydroxy-2-succinyl-cyclohexa-2,4-diene-1-carboxylate = 2-succinylbenzoate + H2O. It participates in quinol/quinone metabolism; 1,4-dihydroxy-2-naphthoate biosynthesis; 1,4-dihydroxy-2-naphthoate from chorismate: step 4/7. It functions in the pathway quinol/quinone metabolism; menaquinone biosynthesis. Converts 2-succinyl-6-hydroxy-2,4-cyclohexadiene-1-carboxylate (SHCHC) to 2-succinylbenzoate (OSB). Does not show N-succinylamino acid racemase (NSAR) activity with N-succinyl-L-phenylglycine as substrate. This chain is o-succinylbenzoate synthase, found in Thermobifida fusca (strain YX).